The sequence spans 654 residues: Sphingosine kinase 2 (654 aa).

The segment covering 1-17 has biased composition (basic and acidic residues); that stretch reads MNGHLEAEEQQDQRPDQ. Residues 1 to 28 are disordered; sequence MNGHLEAEEQQDQRPDQELTGSWGHGPR. The tract at residues 1-175 is required for binding to sulfatide and phosphoinositides and for membrane localizatione; the sequence is MNGHLEAEEQ…LPGDGEITPD (175 aa). A Nuclear localization signal motif is present at residues 122–130; the sequence is RGRRGARRR. The DAGKc domain occupies 178–325; that stretch reads PRPPRLLLLV…LDLLSVTLAS (148 aa). Residues 188–190 and 220–224 each bind ATP; these read NPF and TERQN. 245-248 contributes to the substrate binding site; that stretch reads SGDG. The active-site Proton donor/acceptor is D247. ATP contacts are provided by residues E252 and 277-279; that span reads GSG. D344 serves as a coordination point for substrate. Residues R351 and R357 each contribute to the ATP site. S387 is subject to Phosphoserine; by MAPK. S393 and S399 each carry phosphoserine. The tract at residues 400-509 is disordered; the sequence is ELTLTPDPAP…PLPTPDARVG (110 aa). A Nuclear export signal motif is present at residues 416-425; the sequence is LHRSVSDLPL. A phosphoserine; by PKD mark is found at S419 and S421. Positions 447–461 are enriched in gly residues; it reads NGGGPELAGDWGGAG. The span at 462-482 shows a compositional bias: low complexity; that stretch reads DAPLSPDPLLSSPPGSPKAAL. A Phosphoserine modification is found at S477. Phosphothreonine; by MAPK is present on T614. 622-624 lines the ATP pocket; it reads DGE.

In terms of assembly, interacts with histone H3. Interacts with HDAC1, HDAC2, MBD2 and SIN3A. Interacts with EEF1A1; the interaction enhances SPHK2 kinase activity. Interacts with PHB2. It depends on Mg(2+) as a cofactor. Post-translationally, phosphorylated by PKD on Ser-419 and Ser-421 upon PMA treatment. Phosphorylation induces export from the nucleus to the cytoplasm. Phosphorylated by MAPK1 and MAPK2 at Ser-387 and Thr-614, phosphorylation is induced by agonists such as EGF and PMA and increases kinase activity. Cleaved by CASP1 in apoptotic cells. The truncated form is released from cells. In terms of tissue distribution, mainly expressed in adult kidney, liver, and brain. Expressed in cerebral cortex and hippocampus (at protein level). Isoform 1 is the predominant form expressed in most tissues.

It is found in the cytoplasm. The protein resides in the nucleus. Its subcellular location is the endoplasmic reticulum. It localises to the mitochondrion inner membrane. The protein localises to the lysosome membrane. It catalyses the reaction a sphingoid base + ATP = a sphingoid 1-phosphate + ADP + H(+). The catalysed reaction is sphing-4-enine + ATP = sphing-4-enine 1-phosphate + ADP + H(+). It carries out the reaction sphinganine + ATP = sphinganine 1-phosphate + ADP + H(+). The enzyme catalyses (4R)-hydroxysphinganine + ATP = (4R)-hydroxysphinganine 1-phosphate + ADP + H(+). Its activity is regulated as follows. Inhibited by sulfatide. Kinase activity is increased by phosphorylation by MAPK2 upon PMA or EGF treatments. Its function is as follows. Catalyzes the phosphorylation of sphingosine to form sphingosine-1-phosphate (SPP), a lipid mediator with both intra- and extracellular functions. Also acts on D-erythro-dihydrosphingosine, D-erythro-sphingosine and L-threo-dihydrosphingosine. Binds phosphoinositides. In contrast to prosurvival SPHK1, has a positive effect on intracellular ceramide levels, inhibits cells growth and enhances apoptosis. In mitochondria, is important for cytochrome-c oxidase assembly and mitochondrial respiration. The SPP produced in mitochondria binds PHB2 and modulates the regulation via PHB2 of complex IV assembly and respiration. In nucleus, plays a role in epigenetic regulation of gene expression. Interacts with HDAC1 and HDAC2 and, through SPP production, inhibits their enzymatic activity, preventing the removal of acetyl groups from lysine residues with histones. Up-regulates acetylation of histone H3-K9, histone H4-K5 and histone H2B-K12. In nucleus, may have an inhibitory effect on DNA synthesis and cell cycle. In mast cells, is the main regulator of SPP production which mediates calcium influx, NF-kappa-B activation, cytokine production, such as TNF and IL6, and degranulation of mast cells. In dopaminergic neurons, is involved in promoting mitochondrial functions regulating ATP and ROS levels. Also involved in the regulation of glucose and lipid metabolism. The protein is Sphingosine kinase 2 of Homo sapiens (Human).